The chain runs to 492 residues: Aspartate aminotransferase (492 aa).

A chloroplast-targeting transit peptide spans 1–66 (MMSASFKCPV…KGSCCLFNIR (66 aa)). L-aspartate contacts are provided by glycine 119, tryptophan 206, and asparagine 256. Lysine 319 carries the N6-(pyridoxal phosphate)lysine modification. Arginine 458 is an L-aspartate binding site.

This sequence belongs to the class-I pyridoxal-phosphate-dependent aminotransferase family. As to quaternary structure, homodimer. It depends on pyridoxal 5'-phosphate as a cofactor.

Its subcellular location is the plastid. It localises to the chloroplast. The catalysed reaction is L-aspartate + 2-oxoglutarate = oxaloacetate + L-glutamate. Prokaryotic-type aspartate aminotransferase. Specific for aspartate and no activity with glutamine, asparagine, alanine, histidine, leucine, methionine, lysine, arginine, tryptophan, tyrosine, phenylalanine or kynurenine. The polypeptide is Aspartate aminotransferase (AAT) (Pinus pinaster (Maritime pine)).